A 419-amino-acid polypeptide reads, in one-letter code: Enolase (419 aa).

(2R)-2-phosphoglycerate is bound at residue Gln161. Catalysis depends on Glu205, which acts as the Proton donor. Mg(2+) is bound by residues Asp240, Glu283, and Asp309. Residues Lys334, Arg363, Ser364, and Lys385 each coordinate (2R)-2-phosphoglycerate. Lys334 acts as the Proton acceptor in catalysis.

The protein belongs to the enolase family. It depends on Mg(2+) as a cofactor.

The protein localises to the cytoplasm. The protein resides in the secreted. It is found in the cell surface. The enzyme catalyses (2R)-2-phosphoglycerate = phosphoenolpyruvate + H2O. Its pathway is carbohydrate degradation; glycolysis; pyruvate from D-glyceraldehyde 3-phosphate: step 4/5. Functionally, catalyzes the reversible conversion of 2-phosphoglycerate (2-PG) into phosphoenolpyruvate (PEP). It is essential for the degradation of carbohydrates via glycolysis. This Saccharolobus solfataricus (strain ATCC 35092 / DSM 1617 / JCM 11322 / P2) (Sulfolobus solfataricus) protein is Enolase.